The sequence spans 192 residues: Ribosomal RNA small subunit methyltransferase G (192 aa).

S-adenosyl-L-methionine-binding positions include glycine 59, 111-112 (IE), and arginine 124.

This sequence belongs to the methyltransferase superfamily. RNA methyltransferase RsmG family.

The protein localises to the cytoplasm. Specifically methylates the N7 position of a guanine in 16S rRNA. The sequence is that of Ribosomal RNA small subunit methyltransferase G from Mycoplasma genitalium (strain ATCC 33530 / DSM 19775 / NCTC 10195 / G37) (Mycoplasmoides genitalium).